The primary structure comprises 569 residues: Proline--tRNA ligase (569 aa).

This sequence belongs to the class-II aminoacyl-tRNA synthetase family. ProS type 1 subfamily. Homodimer.

Its subcellular location is the cytoplasm. The enzyme catalyses tRNA(Pro) + L-proline + ATP = L-prolyl-tRNA(Pro) + AMP + diphosphate. Catalyzes the attachment of proline to tRNA(Pro) in a two-step reaction: proline is first activated by ATP to form Pro-AMP and then transferred to the acceptor end of tRNA(Pro). As ProRS can inadvertently accommodate and process non-cognate amino acids such as alanine and cysteine, to avoid such errors it has two additional distinct editing activities against alanine. One activity is designated as 'pretransfer' editing and involves the tRNA(Pro)-independent hydrolysis of activated Ala-AMP. The other activity is designated 'posttransfer' editing and involves deacylation of mischarged Ala-tRNA(Pro). The misacylated Cys-tRNA(Pro) is not edited by ProRS. The chain is Proline--tRNA ligase from Endomicrobium trichonymphae.